A 136-amino-acid polypeptide reads, in one-letter code: Large ribosomal subunit protein uL16 (136 aa).

Belongs to the universal ribosomal protein uL16 family. As to quaternary structure, part of the 50S ribosomal subunit.

In terms of biological role, binds 23S rRNA and is also seen to make contacts with the A and possibly P site tRNAs. This Erwinia tasmaniensis (strain DSM 17950 / CFBP 7177 / CIP 109463 / NCPPB 4357 / Et1/99) protein is Large ribosomal subunit protein uL16.